Here is a 207-residue protein sequence, read N- to C-terminus: Ras-related protein Rab-8A (207 aa).

GTP contacts are provided by Ser17, Gly18, Val19, Gly20, Lys21, Thr22, Cys23, Ser39, and Thr40. Thr22 serves as a coordination point for Mg(2+). 2 consecutive short sequence motifs (switch) follow at residues 31 to 45 (DAFN…GIDF) and 63 to 80 (DTAG…YYRG). The Mg(2+) site is built by Thr40 and Asp63. Gly66, Asn121, Lys122, Asp124, Ala152, and Lys153 together coordinate GTP. Position 204 is a cysteine methyl ester (Cys204). Cys204 carries S-geranylgeranyl cysteine lipidation. A propeptide spans 205 to 207 (VLL) (removed in mature form).

Belongs to the small GTPase superfamily. Rab family. Requires Mg(2+) as cofactor.

Its subcellular location is the cell membrane. The protein localises to the golgi apparatus. It localises to the endosome membrane. The protein resides in the recycling endosome membrane. It is found in the cell projection. Its subcellular location is the cilium. The protein localises to the cytoplasmic vesicle. It localises to the phagosome membrane. The protein resides in the cytoplasm. It is found in the cytoskeleton. Its subcellular location is the microtubule organizing center. The protein localises to the centrosome. It localises to the centriole. The protein resides in the cilium basal body. It is found in the midbody. It carries out the reaction GTP + H2O = GDP + phosphate + H(+). Regulated by guanine nucleotide exchange factors (GEFs) which promote the exchange of bound GDP for free GTP, GTPase activating proteins (GAPs) which increase the GTP hydrolysis activity, and GDP dissociation inhibitors (GDIs) which inhibit the dissociation of the nucleotide from the GTPase. Activated in response to insulin. In terms of biological role, the small GTPases Rab are key regulators of intracellular membrane trafficking, from the formation of transport vesicles to their fusion with membranes. Rabs cycle between an inactive GDP-bound form and an active GTP-bound form that is able to recruit to membranes different sets of downstream effectors directly responsible for vesicle formation, movement, tethering and fusion. RAB8A is involved in polarized vesicular trafficking and neurotransmitter release. Together with RAB11A, RAB3IP, the exocyst complex, PARD3, PRKCI, ANXA2, CDC42 and DNMBP promotes transcytosis of PODXL to the apical membrane initiation sites (AMIS), apical surface formation and lumenogenesis. Regulates the compacted morphology of the Golgi. Together with MYO5B and RAB11A participates in epithelial cell polarization. Also involved in membrane trafficking to the cilium and ciliogenesis. Together with MICALL2, may also regulate adherens junction assembly. May play a role in insulin-induced transport to the plasma membrane of the glucose transporter GLUT4 and therefore play a role in glucose homeostasis. Involved in autophagy. Participates in the export of a subset of neosynthesized proteins through a Rab8-Rab10-Rab11-dependent endososomal export route. Targeted to and stabilized on stressed lysosomes through LRRK2 phosphorylation. Suppresses stress-induced lysosomal enlargement through EHBP1 and EHNP1L1 effector proteins. The sequence is that of Ras-related protein Rab-8A (RAB8A) from Gallus gallus (Chicken).